A 565-amino-acid polypeptide reads, in one-letter code: Sulfite reductase [NADPH] hemoprotein beta-component (565 aa).

The [4Fe-4S] cluster site is built by cysteine 429, cysteine 435, cysteine 474, and cysteine 478. Cysteine 478 serves as a coordination point for siroheme.

This sequence belongs to the nitrite and sulfite reductase 4Fe-4S domain family. As to quaternary structure, alpha(8)-beta(8). The alpha component is a flavoprotein, the beta component is a hemoprotein. Siroheme serves as cofactor. [4Fe-4S] cluster is required as a cofactor.

It carries out the reaction hydrogen sulfide + 3 NADP(+) + 3 H2O = sulfite + 3 NADPH + 4 H(+). It participates in sulfur metabolism; hydrogen sulfide biosynthesis; hydrogen sulfide from sulfite (NADPH route): step 1/1. Component of the sulfite reductase complex that catalyzes the 6-electron reduction of sulfite to sulfide. This is one of several activities required for the biosynthesis of L-cysteine from sulfate. This is Sulfite reductase [NADPH] hemoprotein beta-component from Shewanella baltica (strain OS185).